The following is a 261-amino-acid chain: Cytochrome c oxidase subunit 3 (261 aa).

Over 1 to 15 the chain is Mitochondrial matrix; that stretch reads MTHQTHAYHMVNPSP. Residues 16–34 traverse the membrane as a helical segment; that stretch reads WPLTGALSALLMTSGLIMW. Topologically, residues 35–40 are mitochondrial intermembrane; that stretch reads FHYNSM. The chain crosses the membrane as a helical span at residues 41–66; sequence ALLTLGFTTNLLTMYQWWRDVIREGT. Residues 67–72 lie on the Mitochondrial matrix side of the membrane; the sequence is FQGHHT. The chain crosses the membrane as a helical span at residues 73–105; it reads PIVQKGLRYGMVLFIVSEVFFFAGFFWAFYHSS. Residues 106–128 are Mitochondrial intermembrane-facing; sequence LAPTPELGGCWPPTGIIPLNPLE. Residues 129 to 152 form a helical membrane-spanning segment; it reads VPLLNTSVLLASGVSITWAHHSLM. Residues 153–155 lie on the Mitochondrial matrix side of the membrane; that stretch reads EGN. Residues 156–183 traverse the membrane as a helical segment; the sequence is RKHMLQALFITISLGVYFTLLQASEYYE. The Mitochondrial intermembrane segment spans residues 184-190; sequence TSFTISD. Residues 191–223 traverse the membrane as a helical segment; sequence GVYGSTFFMATGFHGLHVIIGSTFLIVCFLRQL. Residues 224-232 lie on the Mitochondrial matrix side of the membrane; sequence YYHFTSNHH. The helical transmembrane segment at 233-256 threads the bilayer; it reads FGFEAAAWYWHFVDVVWLFLYVSI. Over 257–261 the chain is Mitochondrial intermembrane; it reads YWWGS.

This sequence belongs to the cytochrome c oxidase subunit 3 family. In terms of assembly, component of the cytochrome c oxidase (complex IV, CIV), a multisubunit enzyme composed of 14 subunits. The complex is composed of a catalytic core of 3 subunits MT-CO1, MT-CO2 and MT-CO3, encoded in the mitochondrial DNA, and 11 supernumerary subunits COX4I, COX5A, COX5B, COX6A, COX6B, COX6C, COX7A, COX7B, COX7C, COX8 and NDUFA4, which are encoded in the nuclear genome. The complex exists as a monomer or a dimer and forms supercomplexes (SCs) in the inner mitochondrial membrane with NADH-ubiquinone oxidoreductase (complex I, CI) and ubiquinol-cytochrome c oxidoreductase (cytochrome b-c1 complex, complex III, CIII), resulting in different assemblies (supercomplex SCI(1)III(2)IV(1) and megacomplex MCI(2)III(2)IV(2)).

The protein resides in the mitochondrion inner membrane. It catalyses the reaction 4 Fe(II)-[cytochrome c] + O2 + 8 H(+)(in) = 4 Fe(III)-[cytochrome c] + 2 H2O + 4 H(+)(out). Component of the cytochrome c oxidase, the last enzyme in the mitochondrial electron transport chain which drives oxidative phosphorylation. The respiratory chain contains 3 multisubunit complexes succinate dehydrogenase (complex II, CII), ubiquinol-cytochrome c oxidoreductase (cytochrome b-c1 complex, complex III, CIII) and cytochrome c oxidase (complex IV, CIV), that cooperate to transfer electrons derived from NADH and succinate to molecular oxygen, creating an electrochemical gradient over the inner membrane that drives transmembrane transport and the ATP synthase. Cytochrome c oxidase is the component of the respiratory chain that catalyzes the reduction of oxygen to water. Electrons originating from reduced cytochrome c in the intermembrane space (IMS) are transferred via the dinuclear copper A center (CU(A)) of subunit 2 and heme A of subunit 1 to the active site in subunit 1, a binuclear center (BNC) formed by heme A3 and copper B (CU(B)). The BNC reduces molecular oxygen to 2 water molecules using 4 electrons from cytochrome c in the IMS and 4 protons from the mitochondrial matrix. This chain is Cytochrome c oxidase subunit 3 (MT-CO3), found in Canis lupus familiaris (Dog).